A 615-amino-acid chain; its full sequence is MAALVTSQLATSGTVLSVTDRFRRPGFQGLRPRNPADAALGMRTVGASAAPKQSRKPHRFDRRCLSMVVRATGSGGMNLVFVGAEMAPWSKTGGLGDVLGGLPAAMAANGHRVMVISPRYDQYKDAWDTSVISEIKVVDRYERVRYFHCYKRGVDRVFVDHPCFLEKVRGKTKEKIYGPDAGTDYEDNQQRFSLLCQAALEVPRILDLNNNPHFSGPYAMLCRAVPRRAGEDVVFVCNDWHTGLLACYLKSNYQSNGIYRTAKVAFCIHNISYQGRFSFDDFAQLNLPDRFKSSFDFIDGYDKPVEGRKINWMKAGILQADKVLTVSPYYAEELISGEARGCELDNIMRLTGITGIVNGMDVSEWDPIKDKFLTVNYDVTTALEGKALNKEALQAEVGLPVDRKVPLVAFIGRLEEQKGPDVMIAAIPEIVKEEDVQIVLLGTGKKKFERLLKSVEEKFPTKVRAVVRFNAPLAHQMMAGADVLAVTSRFEPCGLIQLQGMRYGTPCACASTGGLVDTIVEGKTGFHMGRLSVDCNVVEPADVKKVVTTLKRAVKVVGTPAYHEMVKNCMIQDLSWKGPAKNWEDVLLELGVEGSEPGIVGEEIAPLALENVAAP.

The transit peptide at 1–70 (MAALVTSQLA…DRRCLSMVVR (70 aa)) directs the protein to the chloroplast. Lys-91 serves as a coordination point for ADP-alpha-D-glucose.

This sequence belongs to the glycosyltransferase 1 family. Bacterial/plant glycogen synthase subfamily. As to expression, found in seeds and pollen.

It localises to the plastid. It is found in the chloroplast. Its subcellular location is the amyloplast. The enzyme catalyses an NDP-alpha-D-glucose + [(1-&gt;4)-alpha-D-glucosyl](n) = [(1-&gt;4)-alpha-D-glucosyl](n+1) + a ribonucleoside 5'-diphosphate + H(+). It functions in the pathway glycan biosynthesis; starch biosynthesis. This is Granule-bound starch synthase 1, chloroplastic/amyloplastic (WAXY) from Triticum aestivum (Wheat).